Reading from the N-terminus, the 229-residue chain is Small ribosomal subunit protein uS3c (229 aa).

The KH type-2 domain maps to 39 to 128 (LRDNLFKQYP…RIILTILKVQ (90 aa)).

The protein belongs to the universal ribosomal protein uS3 family. Part of the 30S ribosomal subunit.

It is found in the plastid. The protein resides in the chloroplast. The protein is Small ribosomal subunit protein uS3c (rps3) of Tupiella akineta (Green alga).